The primary structure comprises 247 residues: Small ribosomal subunit protein uS2 (247 aa).

The protein belongs to the universal ribosomal protein uS2 family.

In Cupriavidus pinatubonensis (strain JMP 134 / LMG 1197) (Cupriavidus necator (strain JMP 134)), this protein is Small ribosomal subunit protein uS2.